Consider the following 350-residue polypeptide: Heat-inducible transcription repressor HrcA (350 aa).

This sequence belongs to the HrcA family.

In terms of biological role, negative regulator of class I heat shock genes (grpE-dnaK-dnaJ and groELS operons). Prevents heat-shock induction of these operons. This Limosilactobacillus reuteri (strain DSM 20016) (Lactobacillus reuteri) protein is Heat-inducible transcription repressor HrcA.